The chain runs to 212 residues: MLNKQTLISIEDALPGREQPMQIEDCHFVNQSSLTAPLAHHQQQILLGMGCFWGAERLFWQLDGVVSTSVGYAGGFTPNPTYEEVCTGKTGHTEVVRVVFDERVISLAQLLAVFWEKHDPTQGMRQGNDLGTQYRSAIYTYSQDQQEIADKSKLQYQQALEAELRSTITTEIVPAGPYYFAETYHQQYLAKNPDGYCGIGGTGVCFPPSLQG.

The active site involves Cys51.

It belongs to the MsrA Met sulfoxide reductase family.

It carries out the reaction L-methionyl-[protein] + [thioredoxin]-disulfide + H2O = L-methionyl-(S)-S-oxide-[protein] + [thioredoxin]-dithiol. It catalyses the reaction [thioredoxin]-disulfide + L-methionine + H2O = L-methionine (S)-S-oxide + [thioredoxin]-dithiol. Functionally, has an important function as a repair enzyme for proteins that have been inactivated by oxidation. Catalyzes the reversible oxidation-reduction of methionine sulfoxide in proteins to methionine. The protein is Peptide methionine sulfoxide reductase MsrA of Vibrio parahaemolyticus serotype O3:K6 (strain RIMD 2210633).